We begin with the raw amino-acid sequence, 536 residues long: ATPase expression protein 3 (536 aa).

PPR repeat units follow at residues 212–246 (TTTMFNDLIYYFGKKSDYASCREYYSQMKLEKKTP) and 386–421 (TTGSVNILLNAAAEKGRLDLAVLTYNSMKVQLGVTP).

Its subcellular location is the mitochondrion inner membrane. In terms of biological role, required for respiration. In Eremothecium gossypii (strain ATCC 10895 / CBS 109.51 / FGSC 9923 / NRRL Y-1056) (Yeast), this protein is ATPase expression protein 3 (AEP3).